The sequence spans 319 residues: Protein SODIUM POTASSIUM ROOT DEFECTIVE 1 (319 aa).

Polar residues predominate over residues Met1–Cys13. Disordered regions lie at residues Met1–Gly113 and Ser191–Ser248. Over residues Ser14 to Ser27 the composition is skewed to low complexity. The segment covering Ala36 to Arg49 has biased composition (basic and acidic residues). Residues Leu58–Thr67 are compositionally biased toward low complexity. Polar residues-rich tracts occupy residues Ser104–Gly113 and Thr200–Ser210. The segment covering Ser224–Pro242 has biased composition (pro residues). The 67-residue stretch at Asp249–Glu315 folds into the HMA domain. Zn(2+)-binding residues include Cys260 and Cys263.

Interacts with FT, but not with TSF (TWIN SISTER OF FT). As to expression, expressed in vascular tissues of cotyledons, rosette leaves and roots in developing seedlings before and during the floral transition. Expressed specifically in the phloem companion cells. Not detected in embryos or seeds. Not detected in the vegetative shoot apex.

The protein resides in the cytoplasm. The protein localises to the nucleus. Its subcellular location is the endoplasmic reticulum. Required for root meristem maintenance after germination. Involved in phloem translocation, starch accumulation and flowering. Promotes flowering in the photoperiod pathway. Regulates long-distance movement of FT from leaves to the shoot apex through the phloem stream. This Arabidopsis thaliana (Mouse-ear cress) protein is Protein SODIUM POTASSIUM ROOT DEFECTIVE 1.